The chain runs to 1210 residues: V-type proton ATPase 116 kDa subunit a 4 (1210 aa).

Residues 1-715 (MSSFSNVGFV…YTIITFPFLF (715 aa)) lie on the Cytoplasmic side of the membrane. Residues 259-271 (SSKISFTSSSPSP) show a composition bias toward low complexity. A disordered region spans residues 259–292 (SSKISFTSSSPSPQRNPKNEAQKNSSSKREETSM). Positions 275–291 (PKNEAQKNSSSKREETS) are enriched in basic and acidic residues. The stretch at 339 to 405 (FVKQMRRCEE…EREFLDLNNN (67 aa)) forms a coiled coil. Residues 716 to 736 (AVMFGDAAHGAILLLAALFFI) form a helical membrane-spanning segment. The Extracellular portion of the chain corresponds to 737–760 (RNERKIESKKIRDEIFNTFYGGRY). A helical membrane pass occupies residues 761 to 781 (IMMLMGIFSIYTGFLYNDAFA). Topologically, residues 782-855 (KSFNVFGSGW…SFLNSMKMKA (74 aa)) are cytoplasmic. The chain crosses the membrane as a helical span at residues 856–876 (SVIIGITQMTFGVFLSVLNHI). Residues 877–892 (HFKSYIDIISNFIPQV) are Extracellular-facing. A helical transmembrane segment spans residues 893–913 (IFLSCIFIYLCIQIIVKWIFF). Residues 914–976 (SVNAENVFGF…WYPNQRLVET (63 aa)) lie on the Cytoplasmic side of the membrane. A helical membrane pass occupies residues 977 to 997 (ILISISLACIPIMLFGKPLWV). Topologically, residues 998 to 1127 (RFVTSKRHKL…NETIAMCLKP (130 aa)) are extracellular. N-linked (GlcNAc...) asparagine glycans are attached at residues Asn-1010, Asn-1019, and Asn-1118. The helical transmembrane segment at 1128-1148 (VVACVAFFIFASLSLSILIMM) threads the bilayer. Topologically, residues 1149-1210 (EGLSAFLHAL…DISSGQHLHI (62 aa)) are cytoplasmic.

Belongs to the V-ATPase 116 kDa subunit family. V-ATPase is a heteromultimeric enzyme made up of two complexes: the ATP-hydrolytic V1 complex and the proton translocation V0 complex. The V1 complex consists of three catalytic AB heterodimers that form a heterohexamer, three peripheral stalks each consisting of EG heterodimers, one central rotor including subunits D and F, and the regulatory subunits C and H. The proton translocation complex V0 consists of the proton transport subunit a, a ring of proteolipid subunits c9c'', rotary subunit d, subunits e and f, and the accessory subunits vah-19/Ac45 and vah-20/PRR. In terms of tissue distribution, expressed in uterus.

It localises to the membrane. Functionally, subunit of the V0 complex of vacuolar(H+)-ATPase (V-ATPase), a multisubunit enzyme composed of a peripheral complex (V1) that hydrolyzes ATP and a membrane integral complex (V0) that translocates protons. V-ATPase is responsible for acidifying and maintaining the pH of intracellular compartments and in some cell types, is targeted to the plasma membrane, where it is responsible for acidifying the extracellular environment. This chain is V-type proton ATPase 116 kDa subunit a 4, found in Caenorhabditis elegans.